The primary structure comprises 525 residues: NGFI-A-binding protein 2 (525 aa).

The interval 1-22 (MHRAPSPTAEQPPGGGDSARRT) is disordered. Phosphoserine is present on serine 6. Residues 35–113 (ALPRTLGELQ…REWATNPGLF (79 aa)) form an NCD1 region. The disordered stretch occupies residues 135–237 (GTRKGSMSNG…GGTGGGPDRL (103 aa)). A phosphoserine mark is found at serine 157, serine 159, serine 162, and serine 171. Over residues 212 to 234 (AGGGVPEGTGAGGLAAGGTGGGP) the composition is skewed to gly residues. The NCD2 stretch occupies residues 267-356 (LLKLNKKLAR…SRQVARESTY (90 aa)). Positions 353 to 384 (ESTYLSSLKGSRLHPEELGGPPLKKLKQEVGE) are necessary for nuclear localization. Lysine 379 participates in a covalent cross-link: Glycyl lysine isopeptide (Lys-Gly) (interchain with G-Cter in SUMO1). The disordered stretch occupies residues 380-416 (QEVGEQSHPEIQQPPPGPESYVPPYRPSLEEDSASLS). Serine 479 carries the post-translational modification Phosphoserine. Residues 502–525 (PGPHPALVEGRRSSVKVEAEASRQ) form a disordered region. Residues 510–525 (EGRRSSVKVEAEASRQ) are compositionally biased toward basic and acidic residues. Lysine 517 is covalently cross-linked (Glycyl lysine isopeptide (Lys-Gly) (interchain with G-Cter in SUMO1); alternate). Lysine 517 participates in a covalent cross-link: Glycyl lysine isopeptide (Lys-Gly) (interchain with G-Cter in SUMO2); alternate.

It belongs to the NAB family. As to quaternary structure, homomultimers may associate with EGR1 bound to DNA. In terms of processing, sumoylation by EGR2 represses EGR2 transcriptional activity in hindbrain. In terms of tissue distribution, widely expressed at low levels. Highly expressed in melanoma cell lines.

It localises to the nucleus. Acts as a transcriptional repressor for zinc finger transcription factors EGR1 and EGR2. Isoform 2 lacks repression ability. The sequence is that of NGFI-A-binding protein 2 (NAB2) from Homo sapiens (Human).